We begin with the raw amino-acid sequence, 217 residues long: 3,4-dihydroxy-2-butanone 4-phosphate synthase (217 aa).

Residues 37 to 38, Asp42, 150 to 154, and Glu174 each bind D-ribulose 5-phosphate; these read RE and RGGHT. Glu38 contributes to the Mg(2+) binding site. His153 is a binding site for Mg(2+).

It belongs to the DHBP synthase family. In terms of assembly, homodimer. It depends on Mg(2+) as a cofactor. Mn(2+) serves as cofactor.

The catalysed reaction is D-ribulose 5-phosphate = (2S)-2-hydroxy-3-oxobutyl phosphate + formate + H(+). Its pathway is cofactor biosynthesis; riboflavin biosynthesis; 2-hydroxy-3-oxobutyl phosphate from D-ribulose 5-phosphate: step 1/1. Catalyzes the conversion of D-ribulose 5-phosphate to formate and 3,4-dihydroxy-2-butanone 4-phosphate. This is 3,4-dihydroxy-2-butanone 4-phosphate synthase from Pectobacterium atrosepticum (strain SCRI 1043 / ATCC BAA-672) (Erwinia carotovora subsp. atroseptica).